Here is a 402-residue protein sequence, read N- to C-terminus: Argininosuccinate synthase (402 aa).

Residue 7-15 (LYSGGLDTS) participates in ATP binding. Residue Tyr-83 participates in L-citrulline binding. Gly-113 contributes to the ATP binding site. Positions 115, 119, and 120 each coordinate L-aspartate. L-citrulline is bound at residue Asn-119. L-citrulline contacts are provided by Arg-123, Ser-169, Ser-178, Glu-253, and Tyr-265.

Belongs to the argininosuccinate synthase family. Type 1 subfamily. As to quaternary structure, homotetramer.

It localises to the cytoplasm. The enzyme catalyses L-citrulline + L-aspartate + ATP = 2-(N(omega)-L-arginino)succinate + AMP + diphosphate + H(+). It participates in amino-acid biosynthesis; L-arginine biosynthesis; L-arginine from L-ornithine and carbamoyl phosphate: step 2/3. This Thermoplasma acidophilum (strain ATCC 25905 / DSM 1728 / JCM 9062 / NBRC 15155 / AMRC-C165) protein is Argininosuccinate synthase.